A 116-amino-acid chain; its full sequence is Putative UPF0320 protein YJR162C (116 aa).

This sequence belongs to the UPF0320 family.

In Saccharomyces cerevisiae (strain ATCC 204508 / S288c) (Baker's yeast), this protein is Putative UPF0320 protein YJR162C.